A 79-amino-acid polypeptide reads, in one-letter code: MADAGARRPFFRRRKTCPFTGSNAPKIDFKDSKLLMRYVSERGKIVPSRITAVSALKQRELARAIKRARFLGLLPYVIR.

This sequence belongs to the bacterial ribosomal protein bS18 family. As to quaternary structure, part of the 30S ribosomal subunit. Forms a tight heterodimer with protein bS6.

Its function is as follows. Binds as a heterodimer with protein bS6 to the central domain of the 16S rRNA, where it helps stabilize the platform of the 30S subunit. This Afipia carboxidovorans (strain ATCC 49405 / DSM 1227 / KCTC 32145 / OM5) (Oligotropha carboxidovorans) protein is Small ribosomal subunit protein bS18.